The primary structure comprises 747 residues: DNA ligase (747 aa).

NAD(+) is bound by residues 33 to 37, 83 to 84, and Glu113; these read DEEYD and SL. Lys115 (N6-AMP-lysine intermediate) is an active-site residue. Positions 136, 174, 299, and 323 each coordinate NAD(+). Zn(2+) is bound by residues Cys417, Cys420, Cys436, and Cys442. Residues 659–747 enclose the BRCT domain; that stretch reads TGGGVLSGLT…GPGALPEVAE (89 aa).

The protein belongs to the NAD-dependent DNA ligase family. LigA subfamily. Requires Mg(2+) as cofactor. Mn(2+) serves as cofactor.

It catalyses the reaction NAD(+) + (deoxyribonucleotide)n-3'-hydroxyl + 5'-phospho-(deoxyribonucleotide)m = (deoxyribonucleotide)n+m + AMP + beta-nicotinamide D-nucleotide.. DNA ligase that catalyzes the formation of phosphodiester linkages between 5'-phosphoryl and 3'-hydroxyl groups in double-stranded DNA using NAD as a coenzyme and as the energy source for the reaction. It is essential for DNA replication and repair of damaged DNA. The sequence is that of DNA ligase from Leifsonia xyli subsp. xyli (strain CTCB07).